A 161-amino-acid chain; its full sequence is Protein-export protein SecB (161 aa).

It belongs to the SecB family. As to quaternary structure, homotetramer, a dimer of dimers. One homotetramer interacts with 1 SecA dimer.

It is found in the cytoplasm. Its function is as follows. One of the proteins required for the normal export of preproteins out of the cell cytoplasm. It is a molecular chaperone that binds to a subset of precursor proteins, maintaining them in a translocation-competent state. It also specifically binds to its receptor SecA. The chain is Protein-export protein SecB from Coxiella burnetii (strain CbuG_Q212) (Coxiella burnetii (strain Q212)).